The following is a 347-amino-acid chain: Dihydroorotase (347 aa).

The Zn(2+) site is built by His-14 and His-16. Residues 16-18 and Asn-42 each bind substrate; that span reads HLR. Lys-100, His-137, and His-175 together coordinate Zn(2+). At Lys-100 the chain carries N6-carboxylysine. His-137 is a substrate binding site. A substrate-binding site is contributed by Leu-220. A Zn(2+)-binding site is contributed by Asp-248. Asp-248 is a catalytic residue. Positions 252 and 264 each coordinate substrate.

This sequence belongs to the metallo-dependent hydrolases superfamily. DHOase family. Class II DHOase subfamily. Homodimer. The cofactor is Zn(2+).

It catalyses the reaction (S)-dihydroorotate + H2O = N-carbamoyl-L-aspartate + H(+). Its pathway is pyrimidine metabolism; UMP biosynthesis via de novo pathway; (S)-dihydroorotate from bicarbonate: step 3/3. In terms of biological role, catalyzes the reversible cyclization of carbamoyl aspartate to dihydroorotate. The sequence is that of Dihydroorotase from Pseudomonas syringae pv. syringae (strain B728a).